Consider the following 437-residue polypeptide: O-methyltransferase 3 (437 aa).

Residues 1–21 are disordered; it reads MNNKTSNGDITNDEPTVGSKR. The stretch at 146-180 forms a coiled coil; the sequence is SDNLYQDKDDLEKQEKEREKKMANLLSKNVDIKEL. The interval 408–437 is disordered; the sequence is DPINNNNNNNNNNNNNNNNTTTTTSTTTTN. Residues 411–437 show a composition bias toward low complexity; sequence NNNNNNNNNNNNNNNNTTTTTSTTTTN.

Belongs to the methyltransferase superfamily. METL family.

Its function is as follows. Probable methyltransferase. The protein is O-methyltransferase 3 (omt3) of Dictyostelium discoideum (Social amoeba).